The following is a 123-amino-acid chain: Small ribosomal subunit protein uS12 (123 aa).

The residue at position 89 (D89) is a 3-methylthioaspartic acid.

This sequence belongs to the universal ribosomal protein uS12 family. As to quaternary structure, part of the 30S ribosomal subunit. Contacts proteins S8 and S17. May interact with IF1 in the 30S initiation complex.

Functionally, with S4 and S5 plays an important role in translational accuracy. Interacts with and stabilizes bases of the 16S rRNA that are involved in tRNA selection in the A site and with the mRNA backbone. Located at the interface of the 30S and 50S subunits, it traverses the body of the 30S subunit contacting proteins on the other side and probably holding the rRNA structure together. The combined cluster of proteins S8, S12 and S17 appears to hold together the shoulder and platform of the 30S subunit. In Prochlorococcus marinus (strain MIT 9211), this protein is Small ribosomal subunit protein uS12.